The chain runs to 210 residues: HTH-type transcriptional repressor FabR (210 aa).

One can recognise an HTH tetR-type domain in the interval 10–70; it reads KTRRSLVEAA…TMVDESGLML (61 aa). Positions 33–52 form a DNA-binding region, H-T-H motif; sequence SLREVAREAGIAPTSFYRHF.

As to quaternary structure, homodimer.

The protein localises to the cytoplasm. In terms of biological role, represses the transcription of fabB, involved in unsaturated fatty acid (UFA) biosynthesis. By controlling UFA production, FabR directly influences the physical properties of the membrane bilayer. This chain is HTH-type transcriptional repressor FabR, found in Salmonella arizonae (strain ATCC BAA-731 / CDC346-86 / RSK2980).